The primary structure comprises 713 residues: Serine/threonine-protein kinase SSN3 (713 aa).

Residues 66-484 enclose the Protein kinase domain; that stretch reads YTILGFLSSG…ANQALEHAWF (419 aa). 72–80 lines the ATP pocket; sequence LSSGTYGRV. Residues 104-120 show a composition bias toward low complexity; it reads NAGTGSGTATVGSGAST. A disordered region spans residues 104–188; sequence NAGTGSGTAT…GGSDNTLQLS (85 aa). Residues 129-142 show a composition bias toward polar residues; the sequence is QQHQLLDSPSSSLH. The segment covering 158–175 has biased composition (low complexity); it reads GTPSASPSLSASLGTSTA. Lys201 serves as a coordination point for ATP. Asp304 serves as the catalytic Proton acceptor. Positions 657-672 are enriched in polar residues; it reads SNPATVRSSHSIGSTE. The tract at residues 657-713 is disordered; that stretch reads SNPATVRSSHSIGSTESITPTTSSQPIPAQPSSAPLARTTNLVATATRNQQRKRQRN. Low complexity predominate over residues 673-691; sequence SITPTTSSQPIPAQPSSAP. A compositionally biased stretch (polar residues) spans 694–705; the sequence is RTTNLVATATRN.

It belongs to the protein kinase superfamily. CMGC Ser/Thr protein kinase family. CDC2/CDKX subfamily. In terms of assembly, component of the srb8-11 complex, a regulatory module of the Mediator complex. The cofactor is Mg(2+).

Its subcellular location is the nucleus. The catalysed reaction is L-seryl-[protein] + ATP = O-phospho-L-seryl-[protein] + ADP + H(+). It carries out the reaction L-threonyl-[protein] + ATP = O-phospho-L-threonyl-[protein] + ADP + H(+). It catalyses the reaction [DNA-directed RNA polymerase] + ATP = phospho-[DNA-directed RNA polymerase] + ADP + H(+). In terms of biological role, component of the srb8-11 complex. The srb8-11 complex is a regulatory module of the Mediator complex which is itself dependent transcription. The srb8-11 complex may be involved in the transcriptional repression of a subset of genes regulated by Mediator. It may inhibit the association of the Mediator complex with RNA polymerase II to form the holoenzyme complex. The srb8-11 complex phosphorylates the C-terminal domain (CTD) of the largest subunit of RNA polymerase II. The protein is Serine/threonine-protein kinase SSN3 (SSN3) of Mycosarcoma maydis (Corn smut fungus).